The primary structure comprises 326 residues: Probable cell division protein WhiA (326 aa).

The H-T-H motif DNA-binding region spans 275–308; sequence SLDELGRLADPPMTKDAIAGRIRRLLAMADKRAS.

The protein belongs to the WhiA family.

In terms of biological role, involved in cell division and chromosome segregation. In Renibacterium salmoninarum (strain ATCC 33209 / DSM 20767 / JCM 11484 / NBRC 15589 / NCIMB 2235), this protein is Probable cell division protein WhiA.